We begin with the raw amino-acid sequence, 352 residues long: RNA demethylase ALKBH5 (352 aa).

The span at 18-34 (RDKVFEYSNGEKRKYRE) shows a compositional bias: basic and acidic residues. Positions 18–47 (RDKVFEYSNGEKRKYRESDDDESEYEERRD) are disordered. Tyrosine 107 is a catalytic residue. 2-oxoglutarate is bound by residues asparagine 161, tyrosine 163, and histidine 172. Fe cation is bound by residues histidine 172, aspartate 174, and histidine 234. A disulfide bridge connects residues cysteine 198 and cysteine 235. The 2-oxoglutarate site is built by histidine 234 and arginine 245. The interval 260–352 (LDSNSLSPSI…PTRRVKMRRH (93 aa)) is disordered. Basic residues predominate over residues 272–285 (PKRRHILKAKRSHR). 2 stretches are compositionally biased toward basic and acidic residues: residues 286 to 306 (KADP…ELQR) and 315 to 343 (RHDD…DHAP).

The protein belongs to the alkB family. As to quaternary structure, monomer. Fe(2+) serves as cofactor.

The protein resides in the nucleus speckle. The enzyme catalyses an N(6)-methyladenosine in mRNA + 2-oxoglutarate + O2 = an adenosine in mRNA + formaldehyde + succinate + CO2. Dioxygenase that specifically demethylates N(6)-methyladenosine (m6A) RNA, the most prevalent internal modification of messenger RNA (mRNA) in higher eukaryotes. Demethylates RNA by oxidative demethylation, which requires molecular oxygen, alpha-ketoglutarate and iron. Demethylation of m6A mRNA affects mRNA processing, translation and export. In Danio rerio (Zebrafish), this protein is RNA demethylase ALKBH5 (alkbh5).